The following is a 603-amino-acid chain: Elongation factor 4 (603 aa).

The tr-type G domain maps to 7-189 (SRIRNFSIIA…SIVHLVPPPQ (183 aa)). GTP-binding positions include 19–24 (DHGKST) and 136–139 (NKID).

It belongs to the TRAFAC class translation factor GTPase superfamily. Classic translation factor GTPase family. LepA subfamily.

The protein resides in the cell inner membrane. The catalysed reaction is GTP + H2O = GDP + phosphate + H(+). Required for accurate and efficient protein synthesis under certain stress conditions. May act as a fidelity factor of the translation reaction, by catalyzing a one-codon backward translocation of tRNAs on improperly translocated ribosomes. Back-translocation proceeds from a post-translocation (POST) complex to a pre-translocation (PRE) complex, thus giving elongation factor G a second chance to translocate the tRNAs correctly. Binds to ribosomes in a GTP-dependent manner. This is Elongation factor 4 from Rippkaea orientalis (strain PCC 8801 / RF-1) (Cyanothece sp. (strain PCC 8801)).